The following is a 685-amino-acid chain: Protein OCTOPUS (685 aa).

3 disordered regions span residues M1 to H34, R152 to E202, and K280 to R314. A compositionally biased stretch (acidic residues) spans V179–E202. A compositionally biased stretch (basic residues) spans K280–R291. Residues N292–R314 show a composition bias toward basic and acidic residues. Phosphoserine is present on S318. Residues V419–R471 form a disordered region. Residues L549–E578 are a coiled coil. Residues S584–G640 form a disordered region. Residues V601–S611 show a composition bias toward low complexity.

It belongs to the OCTOPUS family. Interacts with VCC. Phosphorylation at Ser-318 amplifies the promotion of protophloem differentiation. Expressed in provascular cells and phloem initials (e.g. protophloem, metaphloem, sieve element precursor cells and sieve element procambium precursor cells).

Its subcellular location is the cell membrane. It localises to the cytoplasm. In terms of biological role, potentiates primary root protophloem differentiation. Required, together with VCC, for embryo provasculature development and cotyledon vascular complexity and connectivity. Regulates roots architecture. Mediates the recruitment of ASK7/BIN2 to the plasma membrane. This chain is Protein OCTOPUS, found in Arabidopsis thaliana (Mouse-ear cress).